The following is a 104-amino-acid chain: Guanidinium exporter (104 aa).

Position 1 (Met1) is a topological domain, cytoplasmic. Residues 2-19 (AWIILVIAGLLEVIWAIG) form a helical membrane-spanning segment. The Periplasmic portion of the chain corresponds to 20-28 (LKYSHGFSR). The helical transmembrane segment at 29-48 (LTPSIITLVAMAASVFLLAY) threads the bilayer. Over 49–54 (AMKSLP) the chain is Cytoplasmic. A helical membrane pass occupies residues 55 to 77 (AGTAYAVWTGIGAVGTAILGIVL). Residues 78–81 (LGES) are Periplasmic-facing. The helical transmembrane segment at 82–100 (ASLARILSLGLILAGIIGL) threads the bilayer. The Cytoplasmic segment spans residues 101 to 104 (KLAS).

Belongs to the drug/metabolite transporter (DMT) superfamily. Small multidrug resistance (SMR) (TC 2.A.7.1) family. Gdx/SugE subfamily.

The protein localises to the cell inner membrane. In terms of biological role, guanidinium ion exporter. Couples guanidinium export to the proton motive force, exchanging one guanidinium ion for two protons. This Yersinia pestis protein is Guanidinium exporter.